The following is a 472-amino-acid chain: Eukaryotic translation initiation factor 2 subunit 3 (472 aa).

N-acetylalanine is present on A2. S16 is subject to Phosphoserine. In terms of domain architecture, tr-type G spans 39–248 (QATINIGTIG…IVKKIPVPPR (210 aa)). The G1 stretch occupies residues 48 to 55 (GHVAHGKS). A GTP-binding site is contributed by 51–56 (AHGKST). The G2 stretch occupies residues 76–80 (NITIK). Residues 134–137 (DCPG) form a G3 region. GTP is bound by residues 190–193 (NKID) and 225–227 (SAQ). The interval 190 to 193 (NKID) is G4. The interval 225–227 (SAQ) is G5. The segment at 457-469 (GQIRRGVTIKPTV) is interacts with CDC123.

It belongs to the TRAFAC class translation factor GTPase superfamily. Classic translation factor GTPase family. EIF2G subfamily. As to quaternary structure, eukaryotic translation initiation factor 2 eIF2 is a heterotrimeric complex composed of an alpha (EIF2S1), a beta (EIF2S2) and a gamma (EIF2S3) chain. eIF2 is member of the 43S pre-initiation complex (43S PIC). Interacts (via C-terminus) with CDC123; the interaction is direct.

It localises to the cytoplasm. The protein resides in the cytosol. It carries out the reaction GTP + H2O = GDP + phosphate + H(+). Functionally, member of the eIF2 complex that functions in the early steps of protein synthesis by forming a ternary complex with GTP and initiator tRNA. This complex binds to a 40S ribosomal subunit, followed by mRNA binding to form the 43S pre-initiation complex (43S PIC). Junction of the 60S ribosomal subunit to form the 80S initiation complex is preceded by hydrolysis of the GTP bound to eIF2 and release of an eIF2-GDP binary complex. In order for eIF2 to recycle and catalyze another round of initiation, the GDP bound to eIF2 must exchange with GTP by way of a reaction catalyzed by eIF-2B. The polypeptide is Eukaryotic translation initiation factor 2 subunit 3 (EIF2S3) (Pongo abelii (Sumatran orangutan)).